A 218-amino-acid polypeptide reads, in one-letter code: Probable transaldolase (218 aa).

K87 acts as the Schiff-base intermediate with substrate in catalysis.

It belongs to the transaldolase family. Type 3B subfamily.

Its subcellular location is the cytoplasm. It catalyses the reaction D-sedoheptulose 7-phosphate + D-glyceraldehyde 3-phosphate = D-erythrose 4-phosphate + beta-D-fructose 6-phosphate. The protein operates within carbohydrate degradation; pentose phosphate pathway; D-glyceraldehyde 3-phosphate and beta-D-fructose 6-phosphate from D-ribose 5-phosphate and D-xylulose 5-phosphate (non-oxidative stage): step 2/3. Its function is as follows. Transaldolase is important for the balance of metabolites in the pentose-phosphate pathway. The chain is Probable transaldolase from Bacteroides fragilis (strain YCH46).